Here is a 358-residue protein sequence, read N- to C-terminus: Vesicular integral-membrane protein VIP36 (358 aa).

The first 46 residues, 1–46, serve as a signal peptide directing secretion; sequence MAAEAWLWRWGWGWGQRCPGRPGLPGPGPSPTTFLHLLLLLGPVAA. Over 47-324 the chain is Lumenal; sequence DITDGNSEHL…FRNGPLTGWR (278 aa). The L-type lectin-like domain maps to 54-278; sequence EHLKREHSLI…DIISIKLFQL (225 aa). A carbohydrate is bound by residues Ser98 and Asp133. 3 residues coordinate Ca(2+): Asp164, Tyr166, and Asn168. Position 166-168 (166-168) interacts with a carbohydrate; it reads YPN. N-linked (GlcNAc...) asparagine glycosylation occurs at Asn185. His192 serves as a coordination point for a carbohydrate. A Ca(2+)-binding site is contributed by Asp195. Cys204 and Cys241 are disulfide-bonded. 262–264 contacts a carbohydrate; sequence GDL. Residues 325-347 form a helical membrane-spanning segment; it reads VFLLLLCALLGVVVCAVVGAVVF. Residues 348–358 lie on the Cytoplasmic side of the membrane; sequence QKRQERNKRFY.

Ca(2+) is required as a cofactor.

It localises to the golgi apparatus membrane. In terms of biological role, plays a role as an intracellular lectin in the early secretory pathway. Interacts with N-acetyl-D-galactosamine and high-mannose type glycans and may also bind to O-linked glycans. Involved in the transport and sorting of glycoproteins carrying high mannose-type glycans. This Mus musculus (Mouse) protein is Vesicular integral-membrane protein VIP36 (Lman2).